Consider the following 262-residue polypeptide: Apolipoprotein A-I-1 (262 aa).

Residues 1 to 18 form the signal peptide; sequence MKFLALALTILLAAGTQA. The segment at 32-63 is 3 X approximate tandem repeats; that stretch reads VKAALSMYIAQVKLTAQRSIDLLDDTEYKEYK. A run of 2 repeats spans residues 64 to 85 and 87 to 107. Positions 64-262 are 10 X approximate tandem repeats; that stretch reads MQLTQSLDNL…YETISQAMKA (199 aa). The stretch at 108 to 118 is one 3; half-length repeat; the sequence is KDVEELRSQLE. 5 consecutive repeat copies span residues 119-140, 141-162, 163-184, 185-206, and 207-228. One copy of the 9; half-length repeat lies at 229-239; that stretch reads PLSEDFKGQVG. The stretch at 240–262 is repeat 10; that stretch reads PAAEQAKQKLLAFYETISQAMKA.

This sequence belongs to the apolipoprotein A1/A4/E family.

It localises to the secreted. Functionally, participates in the reverse transport of cholesterol from tissues to the liver for excretion by promoting cholesterol efflux from tissues and by acting as a cofactor for the lecithin cholesterol acyltransferase (LCAT). This Oncorhynchus mykiss (Rainbow trout) protein is Apolipoprotein A-I-1.